Here is a 336-residue protein sequence, read N- to C-terminus: Atypical chemokine receptor 1 (336 aa).

At 1–63 the chain is on the extracellular side; it reads MGNCLHPAEL…CNLLDDSALP (63 aa). N-linked (GlcNAc...) asparagine glycans are attached at residues Asn16, Asn27, and Asn33. Disulfide bonds link Cys51-Cys276 and Cys129-Cys195. Residues 64 to 84 form a helical membrane-spanning segment; it reads FFILVSVLGILASGIVLFMFF. Residues 85 to 95 lie on the Cytoplasmic side of the membrane; sequence RPLFHWQLCPG. Residues 96–116 traverse the membrane as a helical segment; that stretch reads WPVLAQLAVGSALFSIVVPIL. Topologically, residues 117–129 are extracellular; the sequence is APGLGNTRSSALC. A helical membrane pass occupies residues 130–153; the sequence is SLGYCVWYGSAFAQALLLGCHASL. Topologically, residues 154–166 are cytoplasmic; that stretch reads GPKLGADQVPGLT. Residues 167-187 form a helical membrane-spanning segment; sequence LGLSVGLWGVAALLTLPVTLA. The Extracellular segment spans residues 188 to 207; that stretch reads SGASGGLCTPVYSMELKALQ. Residues 208–228 form a helical membrane-spanning segment; that stretch reads ATHAVACLAIFVLLPLGLFGA. Topologically, residues 229–244 are cytoplasmic; that stretch reads KGLKKALGMGPGPWMN. The helical transmembrane segment at 245-265 threads the bilayer; sequence ILWAWFIFWWPHGVVLGLDFL. Topologically, residues 266–287 are extracellular; that stretch reads VRSKLLLLSTCLAQQALDLLLN. The helical transmembrane segment at 288–308 threads the bilayer; that stretch reads LAEALAILHCVATPLLLALFC. At 309–336 the chain is on the cytoplasmic side; it reads HQATRTLLPSLPLPEGWSSHLDTLGSKS.

The protein belongs to the G-protein coupled receptor 1 family. Atypical chemokine receptor subfamily.

It localises to the early endosome. It is found in the recycling endosome. Its subcellular location is the membrane. Functionally, atypical chemokine receptor that controls chemokine levels and localization via high-affinity chemokine binding that is uncoupled from classic ligand-driven signal transduction cascades, resulting instead in chemokine sequestration, degradation, or transcytosis. Also known as interceptor (internalizing receptor) or chemokine-scavenging receptor or chemokine decoy receptor. Has a promiscuous chemokine-binding profile, interacting with inflammatory chemokines of both the CXC and the CC subfamilies but not with homeostatic chemokines. Acts as a receptor for chemokines including CCL2, CCL5, CCL7, CCL11, CCL13, CCL14, CCL17, CXCL5, CXCL6, IL8/CXCL8, CXCL11, GRO, RANTES, MCP-1 and TARC. May regulate chemokine bioavailability and, consequently, leukocyte recruitment through two distinct mechanisms: when expressed in endothelial cells, it sustains the abluminal to luminal transcytosis of tissue-derived chemokines and their subsequent presentation to circulating leukocytes; when expressed in erythrocytes, serves as blood reservoir of cognate chemokines but also as a chemokine sink, buffering potential surges in plasma chemokine levels. In Papio hamadryas (Hamadryas baboon), this protein is Atypical chemokine receptor 1 (ACKR1).